The following is a 428-amino-acid chain: C4-dicarboxylate transport protein (428 aa).

Helical transmembrane passes span 4-24 (SLFK…ILLG), 44-64 (LIKM…IAGM), 76-96 (VALL…LIIV), 142-162 (IGAF…MFGF), 184-204 (VIFG…FGAM), 222-242 (LIVC…GSIA), 289-309 (VVGL…SIYL), 326-346 (IFHQ…AAGV), and 352-372 (IVLA…LALI).

The protein belongs to the dicarboxylate/amino acid:cation symporter (DAACS) (TC 2.A.23) family.

The protein resides in the cell inner membrane. Functionally, responsible for the transport of dicarboxylates such as succinate, fumarate, and malate from the periplasm across the membrane. This is C4-dicarboxylate transport protein from Citrobacter koseri (strain ATCC BAA-895 / CDC 4225-83 / SGSC4696).